The primary structure comprises 804 residues: Probable exo-1,4-beta-xylosidase xlnD (804 aa).

The first 17 residues, 1 to 17 (MAVAALALLALLPQALG), serve as a signal peptide directing secretion. N-linked (GlcNAc...) asparagine glycans are attached at residues N20, N115, N139, N234, and N243. Residue D307 is part of the active site. 12 N-linked (GlcNAc...) asparagine glycosylation sites follow: N349, N382, N404, N433, N444, N485, N489, N621, N652, N666, N688, and N710.

Belongs to the glycosyl hydrolase 3 family.

The protein localises to the secreted. The catalysed reaction is Hydrolysis of (1-&gt;4)-beta-D-xylans, to remove successive D-xylose residues from the non-reducing termini.. It functions in the pathway glycan degradation; xylan degradation. Functionally, xylan 1,4-beta-xylosidase involved in the hydrolysis of xylan, a major structural heterogeneous polysaccharide found in plant biomass representing the second most abundant polysaccharide in the biosphere, after cellulose. This is Probable exo-1,4-beta-xylosidase xlnD (xlnD) from Aspergillus japonicus.